Reading from the N-terminus, the 588-residue chain is Glutamyl-tRNA(Gln) amidotransferase subunit B, mitochondrial (588 aa).

A mitochondrion-targeting transit peptide spans 1 to 109; sequence MLRSWIGSGT…RAPTSTSETP (109 aa). The segment covering 22–35 has biased composition (low complexity); the sequence is SSLPSPKASFSSAP. A disordered region spans residues 22 to 50; it reads SSLPSPKASFSSAPNRYLQPPTSADRVPL.

This sequence belongs to the GatB/GatE family. GatB subfamily. Subunit of the heterotrimeric GatCAB amidotransferase (AdT) complex, composed of A, B and C subunits.

The protein localises to the mitochondrion. The catalysed reaction is L-glutamyl-tRNA(Gln) + L-glutamine + ATP + H2O = L-glutaminyl-tRNA(Gln) + L-glutamate + ADP + phosphate + H(+). Its function is as follows. Allows the formation of correctly charged Gln-tRNA(Gln) through the transamidation of misacylated Glu-tRNA(Gln) in the mitochondria. The reaction takes place in the presence of glutamine and ATP through an activated gamma-phospho-Glu-tRNA(Gln). The chain is Glutamyl-tRNA(Gln) amidotransferase subunit B, mitochondrial from Penicillium rubens (strain ATCC 28089 / DSM 1075 / NRRL 1951 / Wisconsin 54-1255) (Penicillium chrysogenum).